Consider the following 557-residue polypeptide: Potassium-transporting ATPase potassium-binding subunit (557 aa).

12 consecutive transmembrane segments (helical) span residues 5–25, 63–83, 132–152, 170–190, 253–273, 283–303, 329–349, 356–376, 379–399, 416–436, 484–504, and 526–546; these read GFLLIVTFLLVLMVLARPLGS, LSAILGLNMLGLAVLFFMLLG, GLTVQNFLSAASGIAVIFALI, LLRITLWVLAPVALLIALFFI, FVQMLAIFVIPTALCFAFGEV, LLWAMSVIFVICVGVVMWAEV, VLVSSLFAVVTTAASCGAVIA, ALGGMVPMWLMQIGEVVFGGV, GLYGMMLFVLLAVFIAGLMIG, LTALAILVTPTLVLMGAALAM, LLAFCMFVGRFGVIIPVMAIA, and LFVGLLIGTVLLVGALTFIPA.

It belongs to the KdpA family. As to quaternary structure, the system is composed of three essential subunits: KdpA, KdpB and KdpC.

The protein localises to the cell inner membrane. Its function is as follows. Part of the high-affinity ATP-driven potassium transport (or Kdp) system, which catalyzes the hydrolysis of ATP coupled with the electrogenic transport of potassium into the cytoplasm. This subunit binds the periplasmic potassium ions and delivers the ions to the membrane domain of KdpB through an intramembrane tunnel. The sequence is that of Potassium-transporting ATPase potassium-binding subunit from Escherichia fergusonii (strain ATCC 35469 / DSM 13698 / CCUG 18766 / IAM 14443 / JCM 21226 / LMG 7866 / NBRC 102419 / NCTC 12128 / CDC 0568-73).